A 351-amino-acid polypeptide reads, in one-letter code: MRQQEILQKLLEGHDLSRQEMETCMNSIMENRFTDAGTGAILALLQKKGATPAEVIGACASIVSKSTPVTLDQQAVDTCGTGGDHTGTFNISTAAAFIACGAGIPIAKHGNRSITSKCGSADVLEALGYQVDLPPCATEELFRETGFAFLFAPLYHPSMKAVAAIRKELGIKTIFNMLGPIINPAGVRRQLIGVFDPSVMDIYAEVLLLNGCEHAMLVHGSTGNSMGLDEPSVCGPTSMIELHQGQIIRHTVEPEDFGLGRWDIGELAGGDSHVNAQIIREILDGSAPQAKIDAALFASAITCYVSGKASCIDEGMSLSKGSLETCEALDKMNLIIKTNQRLAQKCASATN.

Residues G80, 83-84 (GD), T88, 90-93 (NIST), 108-116 (KHGNRSITS), and S120 each bind 5-phospho-alpha-D-ribose 1-diphosphate. An anthranilate-binding site is contributed by G80. S92 serves as a coordination point for Mg(2+). N111 contacts anthranilate. R166 is a binding site for anthranilate. D229 and E230 together coordinate Mg(2+).

The protein belongs to the anthranilate phosphoribosyltransferase family. Homodimer. It depends on Mg(2+) as a cofactor.

The catalysed reaction is N-(5-phospho-beta-D-ribosyl)anthranilate + diphosphate = 5-phospho-alpha-D-ribose 1-diphosphate + anthranilate. The protein operates within amino-acid biosynthesis; L-tryptophan biosynthesis; L-tryptophan from chorismate: step 2/5. In terms of biological role, catalyzes the transfer of the phosphoribosyl group of 5-phosphorylribose-1-pyrophosphate (PRPP) to anthranilate to yield N-(5'-phosphoribosyl)-anthranilate (PRA). This is Anthranilate phosphoribosyltransferase from Chlorobaculum tepidum (strain ATCC 49652 / DSM 12025 / NBRC 103806 / TLS) (Chlorobium tepidum).